We begin with the raw amino-acid sequence, 463 residues long: Asparagine--tRNA ligase (463 aa).

Belongs to the class-II aminoacyl-tRNA synthetase family. Homodimer.

The protein localises to the cytoplasm. It carries out the reaction tRNA(Asn) + L-asparagine + ATP = L-asparaginyl-tRNA(Asn) + AMP + diphosphate + H(+). This is Asparagine--tRNA ligase from Desulfitobacterium hafniense (strain Y51).